Here is a 131-residue protein sequence, read N- to C-terminus: D-ribose pyranase (131 aa).

Histidine 20 functions as the Proton donor in the catalytic mechanism. Substrate contacts are provided by residues aspartate 28, histidine 98, and 120-122 (YAN).

This sequence belongs to the RbsD / FucU family. RbsD subfamily. Homodecamer.

It localises to the cytoplasm. The catalysed reaction is beta-D-ribopyranose = beta-D-ribofuranose. The protein operates within carbohydrate metabolism; D-ribose degradation; D-ribose 5-phosphate from beta-D-ribopyranose: step 1/2. Catalyzes the interconversion of beta-pyran and beta-furan forms of D-ribose. The polypeptide is D-ribose pyranase (Clostridium perfringens (strain 13 / Type A)).